Here is a 462-residue protein sequence, read N- to C-terminus: L-seryl-tRNA(Sec) selenium transferase (462 aa).

The residue at position 293 (Lys293) is an N6-(pyridoxal phosphate)lysine.

The protein belongs to the SelA family. Pyridoxal 5'-phosphate serves as cofactor.

The protein resides in the cytoplasm. The catalysed reaction is L-seryl-tRNA(Sec) + selenophosphate + H(+) = L-selenocysteinyl-tRNA(Sec) + phosphate. Its pathway is aminoacyl-tRNA biosynthesis; selenocysteinyl-tRNA(Sec) biosynthesis; selenocysteinyl-tRNA(Sec) from L-seryl-tRNA(Sec) (bacterial route): step 1/1. Converts seryl-tRNA(Sec) to selenocysteinyl-tRNA(Sec) required for selenoprotein biosynthesis. The chain is L-seryl-tRNA(Sec) selenium transferase from Clostridium botulinum (strain Okra / Type B1).